We begin with the raw amino-acid sequence, 375 residues long: Succinyl-diaminopimelate desuccinylase (375 aa).

His-66 provides a ligand contact to Zn(2+). Asp-68 is an active-site residue. Position 99 (Asp-99) interacts with Zn(2+). The active-site Proton acceptor is the Glu-133. Zn(2+)-binding residues include Glu-134, Glu-162, and His-348.

Belongs to the peptidase M20A family. DapE subfamily. As to quaternary structure, homodimer. It depends on Zn(2+) as a cofactor. The cofactor is Co(2+).

It catalyses the reaction N-succinyl-(2S,6S)-2,6-diaminopimelate + H2O = (2S,6S)-2,6-diaminopimelate + succinate. Its pathway is amino-acid biosynthesis; L-lysine biosynthesis via DAP pathway; LL-2,6-diaminopimelate from (S)-tetrahydrodipicolinate (succinylase route): step 3/3. Functionally, catalyzes the hydrolysis of N-succinyl-L,L-diaminopimelic acid (SDAP), forming succinate and LL-2,6-diaminopimelate (DAP), an intermediate involved in the bacterial biosynthesis of lysine and meso-diaminopimelic acid, an essential component of bacterial cell walls. This is Succinyl-diaminopimelate desuccinylase from Salmonella typhi.